Reading from the N-terminus, the 188-residue chain is dTTP/UTP pyrophosphatase (188 aa).

Aspartate 70 acts as the Proton acceptor in catalysis.

Belongs to the Maf family. YhdE subfamily. It depends on a divalent metal cation as a cofactor.

Its subcellular location is the cytoplasm. The enzyme catalyses dTTP + H2O = dTMP + diphosphate + H(+). It catalyses the reaction UTP + H2O = UMP + diphosphate + H(+). Its function is as follows. Nucleoside triphosphate pyrophosphatase that hydrolyzes dTTP and UTP. May have a dual role in cell division arrest and in preventing the incorporation of modified nucleotides into cellular nucleic acids. The sequence is that of dTTP/UTP pyrophosphatase from Clostridium botulinum (strain Alaska E43 / Type E3).